We begin with the raw amino-acid sequence, 607 residues long: MDNEQRLKRRENIRNFSIIAHIDHGKSTLADRILENTKSVETRDMQDQLLDSMDLERERGITIKLNAVRLKYEAKDGNTYTFHLIDTPGHVDFTYEVSRSLAACEGAILVVDAAQGIEAQTLANVYLALDNELELLPVINKIDLPAAEPERVKQEIEDMIGLDQDDVVLASAKSNIGIEEILEKIVEVVPAPDGDPEAPLKALIFDSEYDPYRGVISSIRIVDGVVKAGDKIRMMATGKEFEVTEVGINTPKQLPVDELTVGDVGYIIASIKNVDDSRVGDTITLASRPASEPLQGYKKMNPMVYCGLFPIDNKNYNDLREALEKLQLNDASLEFEPESSQALGFGYRTGFLGMLHMEIIQERIEREFGIELIATAPSVIYQCVLRDGSEVTVDNPAQMPDRDKIDKIFEPYVRATMMVPNDYVGAVMELCQRKRGQFINMDYLDDIRVNIVYELPLAEVVFDFFDQLKSNTKGYASFDYEFIENKESNLVKMDILLNGDKVDALSFIVHRDFAYERGKALVEKLKTLIPRQQFEVPVQAAIGQKIVARTNIKSMGKNVLAKCYGGDISRKRKLLEKQKAGKAKMKAVGNVEIPQDAFLAVLKMDDE.

The tr-type G domain maps to Glu-11–Asp-193. GTP-binding positions include Asp-23–Thr-28 and Asn-140–Asp-143.

Belongs to the TRAFAC class translation factor GTPase superfamily. Classic translation factor GTPase family. LepA subfamily.

The protein localises to the cell membrane. It carries out the reaction GTP + H2O = GDP + phosphate + H(+). Its function is as follows. Required for accurate and efficient protein synthesis under certain stress conditions. May act as a fidelity factor of the translation reaction, by catalyzing a one-codon backward translocation of tRNAs on improperly translocated ribosomes. Back-translocation proceeds from a post-translocation (POST) complex to a pre-translocation (PRE) complex, thus giving elongation factor G a second chance to translocate the tRNAs correctly. Binds to ribosomes in a GTP-dependent manner. This chain is Elongation factor 4, found in Staphylococcus aureus (strain USA300).